Here is a 613-residue protein sequence, read N- to C-terminus: Dihydroxy-acid dehydratase (613 aa).

D81 lines the Mg(2+) pocket. C122 serves as a coordination point for [2Fe-2S] cluster. Mg(2+) is bound by residues D123 and K124. K124 bears the N6-carboxylysine mark. C195 is a binding site for [2Fe-2S] cluster. Residue E491 participates in Mg(2+) binding. S517 (proton acceptor) is an active-site residue.

This sequence belongs to the IlvD/Edd family. Homodimer. [2Fe-2S] cluster is required as a cofactor. The cofactor is Mg(2+).

The catalysed reaction is (2R)-2,3-dihydroxy-3-methylbutanoate = 3-methyl-2-oxobutanoate + H2O. It carries out the reaction (2R,3R)-2,3-dihydroxy-3-methylpentanoate = (S)-3-methyl-2-oxopentanoate + H2O. Its pathway is amino-acid biosynthesis; L-isoleucine biosynthesis; L-isoleucine from 2-oxobutanoate: step 3/4. The protein operates within amino-acid biosynthesis; L-valine biosynthesis; L-valine from pyruvate: step 3/4. In terms of biological role, functions in the biosynthesis of branched-chain amino acids. Catalyzes the dehydration of (2R,3R)-2,3-dihydroxy-3-methylpentanoate (2,3-dihydroxy-3-methylvalerate) into 2-oxo-3-methylpentanoate (2-oxo-3-methylvalerate) and of (2R)-2,3-dihydroxy-3-methylbutanoate (2,3-dihydroxyisovalerate) into 2-oxo-3-methylbutanoate (2-oxoisovalerate), the penultimate precursor to L-isoleucine and L-valine, respectively. The protein is Dihydroxy-acid dehydratase of Vibrio parahaemolyticus serotype O3:K6 (strain RIMD 2210633).